Consider the following 436-residue polypeptide: UDP-N-acetylglucosamine 1-carboxyvinyltransferase 1 (436 aa).

Residue 22 to 23 (KN) coordinates phosphoenolpyruvate. Arg-93 is a UDP-N-acetyl-alpha-D-glucosamine binding site. Cys-117 serves as the catalytic Proton donor. The residue at position 117 (Cys-117) is a 2-(S-cysteinyl)pyruvic acid O-phosphothioketal. UDP-N-acetyl-alpha-D-glucosamine contacts are provided by residues 122 to 126 (RPIDQ), Asp-306, and Val-328.

The protein belongs to the EPSP synthase family. MurA subfamily.

It is found in the cytoplasm. It catalyses the reaction phosphoenolpyruvate + UDP-N-acetyl-alpha-D-glucosamine = UDP-N-acetyl-3-O-(1-carboxyvinyl)-alpha-D-glucosamine + phosphate. It functions in the pathway cell wall biogenesis; peptidoglycan biosynthesis. Functionally, cell wall formation. Adds enolpyruvyl to UDP-N-acetylglucosamine. Essential for cell growth. The sequence is that of UDP-N-acetylglucosamine 1-carboxyvinyltransferase 1 from Bacillus subtilis (strain 168).